Reading from the N-terminus, the 76-residue chain is Large ribosomal subunit protein uL29 (76 aa).

The protein belongs to the universal ribosomal protein uL29 family.

This chain is Large ribosomal subunit protein uL29, found in Corynebacterium kroppenstedtii (strain DSM 44385 / JCM 11950 / CIP 105744 / CCUG 35717).